A 422-amino-acid chain; its full sequence is Beta-1,3-galactosyltransferase 2 (422 aa).

Residues 1 to 24 (MLQWRRRHCCFAKMTWNAKRSLFR) are Cytoplasmic-facing. A helical; Signal-anchor for type II membrane protein transmembrane segment spans residues 25–45 (THLIGVLSLVFLFAMFLFFNH). Over 46 to 422 (HDWLPGRAGF…AGRYRHRKLH (377 aa)) the chain is Lumenal. 5 N-linked (GlcNAc...) asparagine glycosylation sites follow: Asn-75, Asn-100, Asn-119, Asn-176, and Asn-226. Residues 90-110 (TLRPQTATNSNNTDLSPQGVT) form a disordered region.

This sequence belongs to the glycosyltransferase 31 family. Requires Mn(2+) as cofactor.

It localises to the golgi apparatus membrane. The enzyme catalyses an N-acetyl-beta-D-glucosaminyl derivative + UDP-alpha-D-galactose = a beta-D-galactosyl-(1-&gt;3)-N-acetyl-beta-D-glucosaminyl derivative + UDP + H(+). It catalyses the reaction a beta-D-GlcNAc-(1-&gt;3)-beta-D-Gal-(1-&gt;4)-beta-D-Glc-(1&lt;-&gt;1)-Cer(d18:1(4E)) + UDP-alpha-D-galactose = a beta-D-Gal-(1-&gt;3)-beta-D-GlcNAc-(1-&gt;3)-beta-D-Gal-(1-&gt;4)-beta-D-Glc-(1&lt;-&gt;1')-Cer(d18:1(4E)) + UDP + H(+). The catalysed reaction is a neolactoside IV(3)-beta-GlcNAc-nLc4Cer(d18:1(4E)) + UDP-alpha-D-galactose = a neolactoside IV(3)-beta-[Gal-beta-(1-&gt;3)-GlcNAc]-nLc4Cer(d18:1(4E)) + UDP + H(+). It participates in protein modification; protein glycosylation. Beta-1,3-galactosyltransferase that transfers galactose from UDP-galactose to substrates with a terminal beta-N-acetylglucosamine (beta-GlcNAc) residue. Can also utilize substrates with a terminal galactose residue, albeit with lower efficiency. Involved in the biosynthesis of the carbohydrate moieties of glycolipids and glycoproteins. Inactive towards substrates with terminal alpha-N-acetylglucosamine (alpha-GlcNAc) or alpha-N-acetylgalactosamine (alpha-GalNAc) residues. The polypeptide is Beta-1,3-galactosyltransferase 2 (B3GALT2) (Pongo abelii (Sumatran orangutan)).